A 366-amino-acid chain; its full sequence is Chitoporin (366 aa).

Residues 1-23 form the signal peptide; it reads MDKMFKRTVIGAAVALASTGLMA.

It belongs to the Gram-negative porin family.

The protein localises to the cell outer membrane. Involved in the uptake of chitosugars. This chain is Chitoporin (chiP), found in Vibrio furnissii.